We begin with the raw amino-acid sequence, 687 residues long: Epithelial splicing regulatory protein 1 (687 aa).

RRM domains lie at 226 to 303, 327 to 407, and 446 to 526; these read TIIR…KATG, VIVR…RSTA, and DCIR…QCSA.

Belongs to the ESRP family.

The protein resides in the nucleus. In terms of biological role, mRNA splicing factor that regulates the formation of epithelial cell-specific isoforms. Specifically regulates the expression of FGFR2-IIIb, an epithelial cell-specific isoform of fgfr2. Acts by directly binding specific sequences in mRNAs. Binds the GU-rich sequence motifs in the ISE/ISS-3, a cis-element regulatory region present in the mRNA of fgfr2. The sequence is that of Epithelial splicing regulatory protein 1 (esrp1) from Xenopus tropicalis (Western clawed frog).